The primary structure comprises 47 residues: Lysis protein for colicins E2 and E3 (47 aa).

An N-terminal signal peptide occupies residues 1-19 (MKKITGIILLLLAVIILSA). Cys20 is lipidated: N-palmitoyl cysteine. Cys20 is lipidated: S-diacylglycerol cysteine.

Its subcellular location is the cell outer membrane. Functionally, lysis proteins are required for both colicin release and partial cell lysis. The protein is Lysis protein for colicins E2 and E3 (hic) of Escherichia coli.